Here is a 208-residue protein sequence, read N- to C-terminus: ATP-dependent Clp protease proteolytic subunit (208 aa).

The active-site Nucleophile is S112. H137 is an active-site residue.

This sequence belongs to the peptidase S14 family. In terms of assembly, fourteen ClpP subunits assemble into 2 heptameric rings which stack back to back to give a disk-like structure with a central cavity, resembling the structure of eukaryotic proteasomes.

The protein resides in the cytoplasm. The catalysed reaction is Hydrolysis of proteins to small peptides in the presence of ATP and magnesium. alpha-casein is the usual test substrate. In the absence of ATP, only oligopeptides shorter than five residues are hydrolyzed (such as succinyl-Leu-Tyr-|-NHMec, and Leu-Tyr-Leu-|-Tyr-Trp, in which cleavage of the -Tyr-|-Leu- and -Tyr-|-Trp bonds also occurs).. Its function is as follows. Cleaves peptides in various proteins in a process that requires ATP hydrolysis. Has a chymotrypsin-like activity. Plays a major role in the degradation of misfolded proteins. This is ATP-dependent Clp protease proteolytic subunit from Buchnera aphidicola subsp. Acyrthosiphon pisum (strain APS) (Acyrthosiphon pisum symbiotic bacterium).